Consider the following 652-residue polypeptide: Vitrin (652 aa).

The N-terminal stretch at 1–26 is a signal peptide; that stretch reads MGIVVLTMKASVIEMFLVLLVTGIQS. The region spanning 40–133 is the LCCL domain; that stretch reads TVPQISCDVR…LSLPRWRESF (94 aa). Intrachain disulfides connect cysteine 46–cysteine 62 and cysteine 66–cysteine 86. 2 disordered regions span residues 137–181 and 196–231; these read EGKP…AAQP and THTT…EPAL. Low complexity predominate over residues 145–158; sequence TYPSSLTYSSSKSP. A compositionally biased stretch (polar residues) spans 196–212; the sequence is THTTLPKPSPSAGSTAS. VWFA domains are found at residues 267–452 and 469–638; these read DLSF…VKRV and DIGF…VPKV. A glycan (N-linked (GlcNAc...) asparagine) is linked at asparagine 494.

As to quaternary structure, binds dermatan sulfate and chondroitin sulfate.

Its subcellular location is the secreted. The protein localises to the extracellular space. It localises to the extracellular matrix. Its function is as follows. Promotes matrix assembly and cell adhesiveness. Plays a role in spinal cord formation by regulating the proliferation and differentiation of neural stem cells. This is Vitrin (VIT) from Bos taurus (Bovine).